Here is a 101-residue protein sequence, read N- to C-terminus: UPF0235 protein MmarC6_1603 (101 aa).

It belongs to the UPF0235 family.

This Methanococcus maripaludis (strain C6 / ATCC BAA-1332) protein is UPF0235 protein MmarC6_1603.